The sequence spans 1613 residues: Reverse gyrase (1613 aa).

Residues methionine 1–glutamate 38 form an RG N-terminal-type zinc finger. 4 residues coordinate Zn(2+): cysteine 10, cysteine 13, cysteine 27, and cysteine 30. Residues glutamine 83 and valine 100–serine 107 each bind ATP. In terms of domain architecture, Helicase ATP-binding spans alanine 87–isoleucine 291. Residues aspartate 203–aspartate 206 carry the DEAD box motif. Residues serine 310–isoleucine 525 form the Helicase C-terminal domain. The segment at aspartate 546 to arginine 1613 is topoisomerase I. In terms of domain architecture, Toprim spans serine 550–isoleucine 712. Mg(2+) is bound by residues glutamate 556 and aspartate 681. One can recognise a Topo IA-type catalytic domain in the interval aspartate 733 to arginine 1613. Residues phenylalanine 1070 to isoleucine 1199 enclose the DOD-type homing endonuclease domain. Tyrosine 1363 serves as the catalytic O-(5'-phospho-DNA)-tyrosine intermediate.

It in the N-terminal section; belongs to the DEAD box helicase family. DDVD subfamily. The protein in the C-terminal section; belongs to the type IA topoisomerase family. In terms of assembly, monomer. The cofactor is Zn(2+). Mg(2+) serves as cofactor. This protein undergoes a protein self splicing that involves a post-translational excision of the intervening region (intein) followed by peptide ligation.

The protein localises to the cytoplasm. It catalyses the reaction ATP + H2O = ADP + phosphate + H(+). Functionally, modifies the topological state of DNA by introducing positive supercoils in an ATP-dependent process, increasing the linking number in steps of +1. Binds to single-stranded DNA, transiently cleaves and then rejoins the ends, introducing a positive supercoil in the process. The scissile phosphodiester is attacked by the catalytic tyrosine of the enzyme, resulting in the formation of a DNA-(5'-phosphotyrosyl)-enzyme intermediate. Probably involved in rewinding DNA strands in regions of the chromosome that have opened up to allow replication, transcription, DNA repair and/or for DNA protection. The chain is Reverse gyrase from Methanocaldococcus jannaschii (strain ATCC 43067 / DSM 2661 / JAL-1 / JCM 10045 / NBRC 100440) (Methanococcus jannaschii).